The primary structure comprises 163 residues: Neurotrophin-3 (163 aa).

The N-terminal stretch at 1–3 (IQS) is a signal peptide. Residues 4-119 (TSMDQGILTE…VLNRTSRRKR (116 aa)) constitute a propeptide that is removed on maturation. A glycan (N-linked (GlcNAc...) asparagine) is linked at asparagine 112.

This sequence belongs to the NGF-beta family.

Its subcellular location is the secreted. In terms of biological role, seems to promote the survival of visceral and proprioceptive sensory neurons. This Epicrates cenchria (Rainbow boa) protein is Neurotrophin-3 (NTF3).